Consider the following 138-residue polypeptide: Small ribosomal subunit protein uS11 (138 aa).

Low complexity predominate over residues 1–12 (MPPKKAAASSAK). The segment at 1-28 (MPPKKAAASSAKKGQKTRRREKKNVPHG) is disordered. Over residues 13 to 22 (KGQKTRRREK) the composition is skewed to basic residues.

Belongs to the universal ribosomal protein uS11 family. As to quaternary structure, part of the 30S ribosomal subunit. Interacts with proteins S7 and S18. Binds to IF-3.

Located on the platform of the 30S subunit, it bridges several disparate RNA helices of the 16S rRNA. Forms part of the Shine-Dalgarno cleft in the 70S ribosome. This is Small ribosomal subunit protein uS11 from Mycobacterium sp. (strain JLS).